Reading from the N-terminus, the 167-residue chain is Large ribosomal subunit protein uL15 (167 aa).

Residues 1 to 10 (MKLNQISDNP) are compositionally biased toward polar residues. A disordered region spans residues 1 to 37 (MKLNQISDNPGATKDRMRVGRGIGSGKGKTAGRGVKG). Residues 21–35 (RGIGSGKGKTAGRGV) are compositionally biased toward gly residues.

This sequence belongs to the universal ribosomal protein uL15 family. In terms of assembly, part of the 50S ribosomal subunit.

Its function is as follows. Binds to the 23S rRNA. In Methylobacterium radiotolerans (strain ATCC 27329 / DSM 1819 / JCM 2831 / NBRC 15690 / NCIMB 10815 / 0-1), this protein is Large ribosomal subunit protein uL15.